A 217-amino-acid polypeptide reads, in one-letter code: Adenylate kinase (217 aa).

10-15 (GGGKGT) contacts ATP. The segment at 30-59 (STGDMLRAAVASGSEVGKKAKAVMDAGQLV) is NMP. Residues Thr31, Arg36, 57 to 59 (QLV), 85 to 88 (GFPR), and Gln92 contribute to the AMP site. The LID stretch occupies residues 126 to 164 (GRYTCAKCGAGYHDKFQLPQVAGKCDSCGGTEFARRPDD). Arg127 serves as a coordination point for ATP. Zn(2+) is bound by residues Cys130, Cys133, Cys150, and Cys153. The AMP site is built by Arg161 and Arg172. Met200 serves as a coordination point for ATP.

Belongs to the adenylate kinase family. As to quaternary structure, monomer.

The protein localises to the cytoplasm. It catalyses the reaction AMP + ATP = 2 ADP. It functions in the pathway purine metabolism; AMP biosynthesis via salvage pathway; AMP from ADP: step 1/1. In terms of biological role, catalyzes the reversible transfer of the terminal phosphate group between ATP and AMP. Plays an important role in cellular energy homeostasis and in adenine nucleotide metabolism. In Paramagnetospirillum magneticum (strain ATCC 700264 / AMB-1) (Magnetospirillum magneticum), this protein is Adenylate kinase.